The sequence spans 64 residues: MAVQQNRKTRSKRGMRRSHDALSASALSVEANTGETHLRHHVSPDGYYRGRRVIAPKHGDETEE.

Residues 1–64 (MAVQQNRKTR…APKHGDETEE (64 aa)) are disordered. The span at 7–16 (RKTRSKRGMR) shows a compositional bias: basic residues.

Belongs to the bacterial ribosomal protein bL32 family.

The sequence is that of Large ribosomal subunit protein bL32 from Methylococcus capsulatus (strain ATCC 33009 / NCIMB 11132 / Bath).